The primary structure comprises 105 residues: Cell division protein FtsB (105 aa).

Residues 1–3 (MGK) lie on the Cytoplasmic side of the membrane. Residues 4-21 (LTLLLLALLVWLQYSLWF) traverse the membrane as a helical segment. Residues 22 to 105 (GKNGLHDYTR…QASGQQQNNR (84 aa)) lie on the Periplasmic side of the membrane. Residues 33 to 62 (NDDVTAQQATNAKLKARNDQLFAEIDDLNG) are a coiled coil.

Belongs to the FtsB family. As to quaternary structure, part of a complex composed of FtsB, FtsL and FtsQ.

Its subcellular location is the cell inner membrane. Its function is as follows. Essential cell division protein. May link together the upstream cell division proteins, which are predominantly cytoplasmic, with the downstream cell division proteins, which are predominantly periplasmic. This Klebsiella aerogenes (Enterobacter aerogenes) protein is Cell division protein FtsB.